We begin with the raw amino-acid sequence, 56 residues long: Chymotrypsin inhibitor (56 aa).

5 disulfide bridges follow: cysteine 3/cysteine 36, cysteine 12/cysteine 32, cysteine 16/cysteine 28, cysteine 20/cysteine 56, and cysteine 38/cysteine 50. The TIL domain maps to 3–56 (CGPNEVFNTCGSACAPTCAQPKTRICTMQCRIGCQCQEGFLRNGEGACVLPENC).

This sequence belongs to the serine protease inhibitor-like (TIL domain-containing) family.

Its subcellular location is the secreted. In terms of biological role, chymotrypsin and cathepsin G inhibitor. In Apis mellifera (Honeybee), this protein is Chymotrypsin inhibitor.